The primary structure comprises 214 residues: tRNA (guanine-N(7)-)-methyltransferase (214 aa).

The S-adenosyl-L-methionine site is built by Glu-45, Asp-70, Asn-97, and Asn-119. Lys-123 provides a ligand contact to substrate. The interval 125-130 (RHNKRR) is interaction with RNA. Substrate contacts are provided by residues Asp-155 and 193-196 (TEYE).

The protein belongs to the class I-like SAM-binding methyltransferase superfamily. TrmB family.

It carries out the reaction guanosine(46) in tRNA + S-adenosyl-L-methionine = N(7)-methylguanosine(46) in tRNA + S-adenosyl-L-homocysteine. It participates in tRNA modification; N(7)-methylguanine-tRNA biosynthesis. Functionally, catalyzes the formation of N(7)-methylguanine at position 46 (m7G46) in tRNA. This is tRNA (guanine-N(7)-)-methyltransferase from Clostridium novyi (strain NT).